The primary structure comprises 103 residues: U-scoloptoxin(24)-Er1a (103 aa).

Positions Met-1–Gly-23 are cleaved as a signal peptide.

The protein belongs to the scoloptoxin-24 family. Contains 1 disulfide bond. In terms of tissue distribution, expressed by the venom gland.

The protein localises to the secreted. The polypeptide is U-scoloptoxin(24)-Er1a (Ethmostigmus rubripes (Giant centipede)).